The following is a 127-amino-acid chain: Large ribosomal subunit protein bL20 (127 aa).

This sequence belongs to the bacterial ribosomal protein bL20 family.

In terms of biological role, binds directly to 23S ribosomal RNA and is necessary for the in vitro assembly process of the 50S ribosomal subunit. It is not involved in the protein synthesizing functions of that subunit. The polypeptide is Large ribosomal subunit protein bL20 (Corynebacterium jeikeium (strain K411)).